The chain runs to 112 residues: Protein preY, mitochondrial (112 aa).

The transit peptide at 1-34 (MLSATCRRLAPALRRLRALSAVAGRFLQVPGARL) directs the protein to the mitochondrion. The TRM112 domain occupies 49–95 (HPALLQFLVCPLSKKPLRYEASTNELVNEELGIAYPIIDGIPNMIPQ).

It belongs to the PREY family. In terms of assembly, interacts (via TRM112 domain) with NDUFAF5; the interaction is direct and stabilizes NDUFAF5 protein. Interacts with COQ5; the interaction is direct, stabilizes COQ5 protein and associates PYURF with COQ enzyme complex.

The protein localises to the mitochondrion. In mitochondria, S-adenosylmethionine-dependent methyltransferase chaperone that supports both coenzyme Q biosynthesis, by stabilizing its components, such as COQ5, and NADH:ubiquinone oxidoreductase complex (complex I, MT-ND1) assembly, by stabilizing complex I assembly factors, such as NDUFAF5. In Mus musculus (Mouse), this protein is Protein preY, mitochondrial (Pyurf).